The chain runs to 346 residues: GTPase Obg (346 aa).

Residues methionine 1–isoleucine 159 form the Obg domain. Residues alanine 160 to glycine 327 enclose the OBG-type G domain. GTP contacts are provided by residues glycine 166–serine 173, phenylalanine 191–histidine 195, aspartate 212–glycine 215, asparagine 279–aspartate 282, and serine 308–alanine 310. Mg(2+) is bound by residues serine 173 and threonine 193.

This sequence belongs to the TRAFAC class OBG-HflX-like GTPase superfamily. OBG GTPase family. As to quaternary structure, monomer. The cofactor is Mg(2+).

Its subcellular location is the cytoplasm. Functionally, an essential GTPase which binds GTP, GDP and possibly (p)ppGpp with moderate affinity, with high nucleotide exchange rates and a fairly low GTP hydrolysis rate. Plays a role in control of the cell cycle, stress response, ribosome biogenesis and in those bacteria that undergo differentiation, in morphogenesis control. This chain is GTPase Obg, found in Bradyrhizobium diazoefficiens (strain JCM 10833 / BCRC 13528 / IAM 13628 / NBRC 14792 / USDA 110).